Here is a 29-residue protein sequence, read N- to C-terminus: Trypsin inhibitor 4 (29 aa).

3 disulfides stabilise this stretch: Cys-3-Cys-20, Cys-10-Cys-22, and Cys-16-Cys-28.

The protein belongs to the protease inhibitor I7 (squash-type serine protease inhibitor) family.

Its subcellular location is the secreted. Its function is as follows. Strongly inhibits trypsin, weakly inhibits chymotrypsin. The chain is Trypsin inhibitor 4 from Cyclanthera pedata (Achocha).